The primary structure comprises 473 residues: Cytochrome P450 716A2 (473 aa).

The helical transmembrane segment at 1–21 threads the bilayer; that stretch reads MYLTIIFLFISSIIFPLLFFL. Heme is bound at residue Cys-420.

The protein belongs to the cytochrome P450 family. The cofactor is heme.

The protein localises to the membrane. Functionally, possesses triterpene oxidizing activity. Catalyzes the C28 hydroxylation of alpha-amyrin, beta-amyrin, and lupeol, producing uvaol, erythrodiol, and betulin, respectively. Catalyzes the C28 carboxylation of alpha- and beta-amyrin. Possesses 22alpha-hydroxylation activity against alpha- and beta-amaryn. In Arabidopsis thaliana (Mouse-ear cress), this protein is Cytochrome P450 716A2.